Consider the following 1220-residue polypeptide: DNA polymerase catalytic subunit (1220 aa).

2 disordered regions span residues 21–43 (GKRP…RPPQ) and 641–691 (QADA…KPGV). Polar residues predominate over residues 646–660 (SETSELAMDSQSHAF).

It belongs to the DNA polymerase type-B family. In terms of assembly, forms a complex with the ssDNA-binding protein, the DNA polymerase processivity factor, and the alkaline exonuclease. Interacts with the helicase-primase complex composed of the primase, the helicase and the primase-associated factor; this interaction may coordinate leading and lagging strand DNA synthesis at the replication fork.

Its subcellular location is the host nucleus. The enzyme catalyses DNA(n) + a 2'-deoxyribonucleoside 5'-triphosphate = DNA(n+1) + diphosphate. It catalyses the reaction Endonucleolytic cleavage to 5'-phosphomonoester.. Functionally, replicates viral genomic DNA. The replication complex is composed of six viral proteins: the DNA polymerase, processivity factor, primase, primase-associated factor, helicase, and ssDNA-binding protein. Additionally, the polymerase contains an intrinsic ribonuclease H (RNase H) activity that specifically degrades RNA/DNA heteroduplexes or duplex DNA substrates in the 5' to 3' direction. Therefore, it can catalyze the excision of the RNA primers that initiate the synthesis of Okazaki fragments at a replication fork during viral DNA replication. This is DNA polymerase catalytic subunit from Equus caballus (Horse).